The primary structure comprises 532 residues: Intercellular adhesion molecule 1 (532 aa).

An N-terminal signal peptide occupies residues Met-1–Ala-27. Topologically, residues Gln-28–Glu-480 are extracellular. Ig-like C2-type domains lie at Gly-41–Ala-103 and Gly-128–Arg-193. 3 disulfides stabilise this stretch: Cys-48–Cys-92, Cys-52–Cys-96, and Cys-135–Cys-186. The Cell attachment site; atypical signature appears at Arg-152 to Glu-154. 2 N-linked (GlcNAc...) asparagine glycosylation sites follow: Asn-202 and Asn-267. Ig-like C2-type domains follow at residues Asp-230–Gln-297 and Gly-325–Ala-378. Cystine bridges form between Cys-237-Cys-290 and Cys-332-Cys-371. N-linked (GlcNAc...) asparagine glycans are attached at residues Asn-385 and Asn-406. Cystine bridges form between Cys-403–Cys-419, Cys-419–Cys-457, and Cys-431–Cys-457. In terms of domain architecture, Ig-like C2-type 5 spans Asn-412–Gly-464. Residues Phe-481–Tyr-503 traverse the membrane as a helical segment. At Asn-504–Pro-532 the chain is on the cytoplasmic side. 2 positions are modified to phosphothreonine: Thr-521 and Thr-530.

Belongs to the immunoglobulin superfamily. ICAM family. In terms of assembly, homodimer. Interacts with MUC1 and promotes cell aggregation in epithelial cells. Interacts with ARHGEF26/SGEF. Interacts (on T cell side) with CD81, CD247 and CD9 at immunological synapses between antigen-presenting cells and T cells. Post-translationally, monoubiquitinated, which is promoted by MARCH9 and leads to endocytosis.

The protein localises to the membrane. Functionally, ICAM proteins are ligands for the leukocyte adhesion protein LFA-1 (integrin alpha-L/beta-2). During leukocyte trans-endothelial migration, ICAM1 engagement promotes the assembly of endothelial apical cups through ARHGEF26/SGEF and RHOG activation. This chain is Intercellular adhesion molecule 1 (ICAM1), found in Gorilla gorilla gorilla (Western lowland gorilla).